A 65-amino-acid chain; its full sequence is Large ribosomal subunit protein bL33m (65 aa).

Residues 1 to 8 (MFLTTANL) constitute a mitochondrion transit peptide.

Belongs to the bacterial ribosomal protein bL33 family. In terms of assembly, component of the mitochondrial ribosome large subunit (39S) which comprises a 16S rRNA and about 50 distinct proteins.

It localises to the mitochondrion. The sequence is that of Large ribosomal subunit protein bL33m (mrpl33) from Tetraodon nigroviridis (Spotted green pufferfish).